Consider the following 340-residue polypeptide: Dihydroorotate dehydrogenase (quinone) (340 aa).

FMN contacts are provided by residues 61 to 65 (AGLDK) and Thr-85. Substrate is bound at residue Lys-65. Residue 110-114 (NRMGF) participates in substrate binding. Positions 138 and 171 each coordinate FMN. Asn-171 is a binding site for substrate. The active-site Nucleophile is Ser-174. Asn-176 contacts substrate. Positions 216 and 244 each coordinate FMN. 245-246 (NT) contributes to the substrate binding site. Residues Gly-267, Gly-296, and 317–318 (YT) each bind FMN.

The protein belongs to the dihydroorotate dehydrogenase family. Type 2 subfamily. In terms of assembly, monomer. Requires FMN as cofactor.

It localises to the cell membrane. The catalysed reaction is (S)-dihydroorotate + a quinone = orotate + a quinol. It participates in pyrimidine metabolism; UMP biosynthesis via de novo pathway; orotate from (S)-dihydroorotate (quinone route): step 1/1. Functionally, catalyzes the conversion of dihydroorotate to orotate with quinone as electron acceptor. The chain is Dihydroorotate dehydrogenase (quinone) from Marinobacter nauticus (strain ATCC 700491 / DSM 11845 / VT8) (Marinobacter aquaeolei).